A 410-amino-acid polypeptide reads, in one-letter code: Riboflavin biosynthesis protein RibBA (410 aa).

The tract at residues 1 to 205 (MENKRIDTIE…IKDLVAFQMR (205 aa)) is DHBP synthase. Residues 30 to 31 (RE), D35, 144 to 148 (RVGHT), and E168 contribute to the D-ribulose 5-phosphate site. E31 contacts Mg(2+). A Mg(2+)-binding site is contributed by H147. A GTP cyclohydrolase II region spans residues 206-410 (RSKLVQRAVE…ISCSCGSGNH (205 aa)). 256–260 (RVHSQ) contributes to the GTP binding site. Zn(2+) is bound by residues C261, C272, and C274. Residues Q277, 299–301 (EGR), and T321 contribute to the GTP site. Catalysis depends on D333, which acts as the Proton acceptor; for GTP cyclohydrolase activity. R335 serves as the catalytic Nucleophile; for GTP cyclohydrolase activity. GTP-binding residues include T356 and K361.

It in the N-terminal section; belongs to the DHBP synthase family. The protein in the C-terminal section; belongs to the GTP cyclohydrolase II family. Mg(2+) is required as a cofactor. Mn(2+) serves as cofactor. It depends on Zn(2+) as a cofactor.

The enzyme catalyses D-ribulose 5-phosphate = (2S)-2-hydroxy-3-oxobutyl phosphate + formate + H(+). It carries out the reaction GTP + 4 H2O = 2,5-diamino-6-hydroxy-4-(5-phosphoribosylamino)-pyrimidine + formate + 2 phosphate + 3 H(+). It functions in the pathway cofactor biosynthesis; riboflavin biosynthesis; 2-hydroxy-3-oxobutyl phosphate from D-ribulose 5-phosphate: step 1/1. It participates in cofactor biosynthesis; riboflavin biosynthesis; 5-amino-6-(D-ribitylamino)uracil from GTP: step 1/4. Its function is as follows. Catalyzes the conversion of D-ribulose 5-phosphate to formate and 3,4-dihydroxy-2-butanone 4-phosphate. Functionally, catalyzes the conversion of GTP to 2,5-diamino-6-ribosylamino-4(3H)-pyrimidinone 5'-phosphate (DARP), formate and pyrophosphate. The protein is Riboflavin biosynthesis protein RibBA of Chlorobium phaeovibrioides (strain DSM 265 / 1930) (Prosthecochloris vibrioformis (strain DSM 265)).